Here is a 239-residue protein sequence, read N- to C-terminus: MSAASVSKVVVVFSGGQDSTTCLIQALTQFDEVHGITFDYGQRHREEIEVAKSLAKRLKITSHKVMDVSLLNELAISALTRDAIPVSHELMENGLPNTFVPGRNILFLTLAGIFAYQLGAEAIITGVCETDFSGYPDCRHDFVRAMESALVQGMDKKLEIITPLMWLNKAQTWALADKYQQLDLVRHHTLTCYNGIVGDGCGDCPACHLRKRGLEDYLQNKAEVMASLDKATATGKPQA.

13–23 (FSGGQDSTTCL) contributes to the ATP binding site. Residues Cys-192, Cys-201, Cys-204, and Cys-207 each contribute to the Zn(2+) site.

The protein belongs to the QueC family. It depends on Zn(2+) as a cofactor.

It carries out the reaction 7-carboxy-7-deazaguanine + NH4(+) + ATP = 7-cyano-7-deazaguanine + ADP + phosphate + H2O + H(+). It functions in the pathway purine metabolism; 7-cyano-7-deazaguanine biosynthesis. In terms of biological role, catalyzes the ATP-dependent conversion of 7-carboxy-7-deazaguanine (CDG) to 7-cyano-7-deazaguanine (preQ(0)). This Shewanella sp. (strain MR-7) protein is 7-cyano-7-deazaguanine synthase.